The following is a 417-amino-acid chain: Serine hydroxymethyltransferase (417 aa).

(6S)-5,6,7,8-tetrahydrofolate contacts are provided by residues Leu122 and 126–128 (GHL). At Lys230 the chain carries N6-(pyridoxal phosphate)lysine. 355–357 (SPF) is a (6S)-5,6,7,8-tetrahydrofolate binding site.

This sequence belongs to the SHMT family. In terms of assembly, homodimer. Pyridoxal 5'-phosphate serves as cofactor.

The protein resides in the cytoplasm. The catalysed reaction is (6R)-5,10-methylene-5,6,7,8-tetrahydrofolate + glycine + H2O = (6S)-5,6,7,8-tetrahydrofolate + L-serine. It functions in the pathway one-carbon metabolism; tetrahydrofolate interconversion. It participates in amino-acid biosynthesis; glycine biosynthesis; glycine from L-serine: step 1/1. In terms of biological role, catalyzes the reversible interconversion of serine and glycine with tetrahydrofolate (THF) serving as the one-carbon carrier. This reaction serves as the major source of one-carbon groups required for the biosynthesis of purines, thymidylate, methionine, and other important biomolecules. Also exhibits THF-independent aldolase activity toward beta-hydroxyamino acids, producing glycine and aldehydes, via a retro-aldol mechanism. This is Serine hydroxymethyltransferase from Francisella tularensis subsp. holarctica (strain LVS).